The sequence spans 360 residues: Mannonate dehydratase (360 aa).

This sequence belongs to the mannonate dehydratase family. It depends on Fe(2+) as a cofactor. The cofactor is Mn(2+).

It catalyses the reaction D-mannonate = 2-dehydro-3-deoxy-D-gluconate + H2O. Its pathway is carbohydrate metabolism; pentose and glucuronate interconversion. Functionally, catalyzes the dehydration of D-mannonate. The protein is Mannonate dehydratase (uxuA) of Thermotoga maritima (strain ATCC 43589 / DSM 3109 / JCM 10099 / NBRC 100826 / MSB8).